The chain runs to 277 residues: Lectin 1 (277 aa).

The first 30 residues, 1–30, serve as a signal peptide directing secretion; the sequence is MSFSSSNFYVILSISLTVFILLFNINKVNS. The N-linked (GlcNAc...) asparagine glycan is linked to N143. Mn(2+) is bound by residues E152 and D154. Ca(2+) is bound by residues D154, N158, and D161. Residues D161 and H167 each coordinate Mn(2+). N269 carries N-linked (GlcNAc...) asparagine glycosylation.

This sequence belongs to the leguminous lectin family.

Functionally, lectin that may be involved in a cell recognition process. In Medicago truncatula (Barrel medic), this protein is Lectin 1 (LEC1).